The chain runs to 76 residues: ATP synthase subunit 9, mitochondrial (76 aa).

2 consecutive transmembrane segments (helical) span residues 14-34 (ISTI…AALI) and 48-68 (FPFA…CLMV).

It belongs to the ATPase C chain family. F-type ATPases have 2 components, CF(1) - the catalytic core - and CF(0) - the membrane proton channel. CF(1) has five subunits: alpha(3), beta(3), gamma(1), delta(1), epsilon(1). CF(0) has three main subunits: a, b and c.

The protein localises to the mitochondrion membrane. In terms of biological role, mitochondrial membrane ATP synthase (F(1)F(0) ATP synthase or Complex V) produces ATP from ADP in the presence of a proton gradient across the membrane which is generated by electron transport complexes of the respiratory chain. F-type ATPases consist of two structural domains, F(1) - containing the extramembraneous catalytic core and F(0) - containing the membrane proton channel, linked together by a central stalk and a peripheral stalk. During catalysis, ATP synthesis in the catalytic domain of F(1) is coupled via a rotary mechanism of the central stalk subunits to proton translocation. Part of the complex F(0) domain. A homomeric c-ring of probably 10 subunits is part of the complex rotary element. In Cyberlindnera mrakii (Yeast), this protein is ATP synthase subunit 9, mitochondrial (ATP9).